Consider the following 440-residue polypeptide: Serine protease inhibitor A3G (440 aa).

Positions G357 to F382 are RCL.

The protein belongs to the serpin family. As to expression, expressed in bone marrow (particularly hematopoietic stem cells), heart, kidney, liver, lung, skeletal muscle, spleen, testis, thymus and T-cells.

It is found in the cytoplasm. The protein localises to the nucleus. Serine and cysteine protease inhibitor. Can inhibit lysosomal papain-like proteases including the cathepsins B, G, H, K, L and V. Ineffective against elastase, granzyme A, granzyme B, or caspases 3, 8 or 9. Inhibition of cytoplasmic cathepsin B following release from the lysosome may protect cells from apoptosis. This may facilitate the survival of progenitor T-cells and the subsequent development of long term memory CD8 T-cells. In Mus musculus (Mouse), this protein is Serine protease inhibitor A3G (Serpina3g).